The primary structure comprises 1040 residues: MQVLPPGSTGGPSRLFILRPVATTLLMAAILLAGIIGYRFLPVAALPEVDYPTIQVVTLYPGASPDVMTSAVTAPLERQFGQMSGLKQMSSQSSGGASVVTLQFQLTLPLDVAEQEVQAAINADTNLLPSDLPNPPIYSKVNPADPPIMTLAVTSNAMPMTQVEDMVETRVAQKISQVSGVGLVTLAGGQRPAVRVKLNAQAIAALGLTSETVRTAITGANVNSAKGSLDGPERAVTLSANDQMQSADEYRKLIIAYQNGAPVRLGDVATVEQGAENSWLGAWANQAPAIVMNVQRQPGANIIATADSIRQMLPQLTESLPKSVKVTVLSDRTTNIRASVRDTQFELMLAIALVVMIIYLFLRNIPATIIPGVAVPLSLIGTFAVMVFLDFSINNLTLMALTIATGFVVDDAIVVIENISRYIEKGEKPLAAALKGAGEIGFTIISLTFSLIAVLIPLLFMGDIVGRLFREFAVTLAVAILISAVVSLTLTPMMCARMLSQQSLRKQNRFSRACERMFDRVIASYGRGLAKVLNHPWLTLSVAFATLLLSVMLWIVIPKGFFPVQDNGIIQGTLQAPQSSSYASMAQRQRQVAERILQDPAVQSLTTFVGVDGANPTLNSARLQINLKPLDARDDRVQQVISRLQTAVATIPGVALYLQPTQDLTIDTQVSRTQYQFTLQATTLDALSHWVPKLQNALQSLPQLSEVSSDWQDRGLAAWVNVDRDSASRLGISMADVDNALYNAFGQRLISTIYTQANQYRVVLEHNTASTPGLAALETIRLTSRDGGTVPLSAIARIEQRFAPLSINHLDQFPVTTFSFNVPEGYSLGDAVQAILDTEKTLALPADITTQFQGSTLAFQAALGSTVWLIVAAVVAMYIVLGVLYESFIHPITILSTLPTAGVGALLALIIAGSELDIIAIIGIILLIGIVKKNAIMMINFALAAEREQGMSPRDAIFQACLLRFRPILMTTLAALLGALPLMLSTGVGAELRRPLGIAMVGGLLVSQVLTLFTTPVIYLLFDRLSLYVKSRFPRHKEEA.

12 consecutive transmembrane segments (helical) span residues 25-45, 347-367, 369-389, 396-416, 440-460, 472-492, 537-557, 863-883, 888-908, 910-930, 968-988, and 998-1018; these read LLMA…PVAA, LMLA…NIPA, IIPG…MVFL, LTLM…IVVI, IGFT…PLLF, FAVT…TLTP, WLTL…WIVI, LGST…VLGV, FIHP…ALLA, IIAG…LIGI, ILMT…STGV, and IAMV…TPVI.

It belongs to the resistance-nodulation-cell division (RND) (TC 2.A.6) family. MdtB subfamily. Part of a tripartite efflux system composed of MdtA, MdtB and MdtC. MdtB forms a heteromultimer with MdtC.

It localises to the cell inner membrane. The chain is Multidrug resistance protein MdtB from Salmonella gallinarum (strain 287/91 / NCTC 13346).